The chain runs to 276 residues: Undecaprenyl-diphosphatase 1 (276 aa).

5 helical membrane passes run 83-103 (FTLNVVIATIPAIALGLLFEK), 108-128 (VLFSPVPVAFALVVGGAIILW), 187-207 (VATEFSFFLAIPIIFGATLYE), 217-237 (VDSLGLFALGLVAAFVSAFVC), and 252-272 (VFAWYRIAFGLFVLLVGYSGW).

This sequence belongs to the UppP family.

Its subcellular location is the cell inner membrane. It carries out the reaction di-trans,octa-cis-undecaprenyl diphosphate + H2O = di-trans,octa-cis-undecaprenyl phosphate + phosphate + H(+). In terms of biological role, catalyzes the dephosphorylation of undecaprenyl diphosphate (UPP). Confers resistance to bacitracin. The protein is Undecaprenyl-diphosphatase 1 of Burkholderia cenocepacia (strain HI2424).